The primary structure comprises 189 residues: Casparian strip membrane protein 1 (189 aa).

At methionine 1 to glycine 25 the chain is on the cytoplasmic side. A helical transmembrane segment spans residues leucine 26–isoleucine 46. Topologically, residues threonine 47–alanine 73 are extracellular. Asparagine 52 is a glycosylation site (N-linked (GlcNAc...) asparagine). Residues phenylalanine 74–isoleucine 94 traverse the membrane as a helical segment. The Cytoplasmic portion of the chain corresponds to serine 95–arginine 108. Residues valine 109 to alanine 129 form a helical membrane-spanning segment. The Extracellular segment spans residues valine 130 to glutamine 158. Residues alanine 159–leucine 179 traverse the membrane as a helical segment. Residues serine 180–proline 189 lie on the Cytoplasmic side of the membrane.

The protein belongs to the Casparian strip membrane proteins (CASP) family. Homodimer and heterodimers.

The protein resides in the cell membrane. In terms of biological role, regulates membrane-cell wall junctions and localized cell wall deposition. Required for establishment of the Casparian strip membrane domain (CSD) and the subsequent formation of Casparian strips, a cell wall modification of the root endodermis that determines an apoplastic barrier between the intraorganismal apoplasm and the extraorganismal apoplasm and prevents lateral diffusion. The polypeptide is Casparian strip membrane protein 1 (Picea glauca (White spruce)).